Reading from the N-terminus, the 114-residue chain is Large ribosomal subunit protein uL22 (114 aa).

Belongs to the universal ribosomal protein uL22 family. As to quaternary structure, part of the 50S ribosomal subunit.

Its function is as follows. This protein binds specifically to 23S rRNA; its binding is stimulated by other ribosomal proteins, e.g. L4, L17, and L20. It is important during the early stages of 50S assembly. It makes multiple contacts with different domains of the 23S rRNA in the assembled 50S subunit and ribosome. The globular domain of the protein is located near the polypeptide exit tunnel on the outside of the subunit, while an extended beta-hairpin is found that lines the wall of the exit tunnel in the center of the 70S ribosome. The protein is Large ribosomal subunit protein uL22 of Lysinibacillus sphaericus (strain C3-41).